The chain runs to 436 residues: MRPGGERPVEGGACNGRSELELLKLRSAECIDEAAERLGALSRAIWSQPELAYEEHHAHRVLTHFFEREPPAASWAVQPHYQLPTAFRAEWEPPEARAPSATPRPLHLGFLCEYDALPGIGHACGHNLIAEVGAAAALGVRGALEGLPRPPPPVKVVVLGTPAEEDGGGKIDLIEAGAFTNLDVVFMAHPSQENAAYLPDMAEHDVTVKYYGKASHSASYPWEGLNALDAAVLAYNNLSVFRQQMKPTWRVHGIIKNGGVKPNIIPSYSELIYYFRAPSMKELQVLTKKAEDCFRAAALASGCTVEIKGGAHDYYNVLPNKSLWKAYMENGRKLGIEFISEDTMLNGPSGSTDFGNVSFVVPGIHPYFHIGSNALNHTEQYTEAAGSQEAQFYTLRTAKALAMTALDVIFKPELLEGIREDFKLKLQEEQFVNAVE.

It belongs to the peptidase M20A family.

The catalysed reaction is beta-alanyl-L-lysine + H2O = beta-alanine + L-lysine. The enzyme catalyses beta-alanyl-L-ornithine + H2O = beta-alanine + L-ornithine. It catalyses the reaction N(2)-(4-aminobutanoyl)-L-lysine + H2O = 4-aminobutanoate + L-lysine. It carries out the reaction N(2)-(4-aminobutanoyl)-L-ornithine + H2O = 4-aminobutanoate + L-ornithine. The catalysed reaction is N(2)-(4-aminobutanoyl)-L-arginine + H2O = 4-aminobutanoate + L-arginine. Its function is as follows. Catalyzes the peptide bond hydrolysis in dipeptides having basic amino acids lysine, ornithine or arginine at C-terminus. Postulated to function in a metabolite repair mechanism by eliminating alternate dipeptide by-products formed during carnosine synthesis. The sequence is that of Xaa-Arg dipeptidase from Homo sapiens (Human).